Reading from the N-terminus, the 382-residue chain is Putative glutamate--cysteine ligase 2-1 (382 aa).

This sequence belongs to the glutamate--cysteine ligase type 2 family. YbdK subfamily.

The catalysed reaction is L-cysteine + L-glutamate + ATP = gamma-L-glutamyl-L-cysteine + ADP + phosphate + H(+). Functionally, ATP-dependent carboxylate-amine ligase which exhibits weak glutamate--cysteine ligase activity. The sequence is that of Putative glutamate--cysteine ligase 2-1 from Frankia casuarinae (strain DSM 45818 / CECT 9043 / HFP020203 / CcI3).